The chain runs to 427 residues: Enolase (427 aa).

Residue Gln163 coordinates (2R)-2-phosphoglycerate. Glu205 functions as the Proton donor in the catalytic mechanism. 3 residues coordinate Mg(2+): Asp242, Glu285, and Asp312. (2R)-2-phosphoglycerate is bound by residues Lys337, Arg366, Ser367, and Lys388. The Proton acceptor role is filled by Lys337.

This sequence belongs to the enolase family. The cofactor is Mg(2+).

It is found in the cytoplasm. It localises to the secreted. The protein resides in the cell surface. It carries out the reaction (2R)-2-phosphoglycerate = phosphoenolpyruvate + H2O. Its pathway is carbohydrate degradation; glycolysis; pyruvate from D-glyceraldehyde 3-phosphate: step 4/5. In terms of biological role, catalyzes the reversible conversion of 2-phosphoglycerate (2-PG) into phosphoenolpyruvate (PEP). It is essential for the degradation of carbohydrates via glycolysis. The polypeptide is Enolase (Nitrosospira multiformis (strain ATCC 25196 / NCIMB 11849 / C 71)).